We begin with the raw amino-acid sequence, 219 residues long: Thiamine-phosphate synthase (219 aa).

Residues 44–48 (QFREK) and Asn79 contribute to the 4-amino-2-methyl-5-(diphosphooxymethyl)pyrimidine site. The Mg(2+) site is built by Asp80 and Asp99. Ser117 contacts 4-amino-2-methyl-5-(diphosphooxymethyl)pyrimidine. 143–145 (TST) contributes to the 2-[(2R,5Z)-2-carboxy-4-methylthiazol-5(2H)-ylidene]ethyl phosphate binding site. Residue Lys146 coordinates 4-amino-2-methyl-5-(diphosphooxymethyl)pyrimidine. Residues Gly175 and 195–196 (IS) each bind 2-[(2R,5Z)-2-carboxy-4-methylthiazol-5(2H)-ylidene]ethyl phosphate.

The protein belongs to the thiamine-phosphate synthase family. Mg(2+) serves as cofactor.

The catalysed reaction is 2-[(2R,5Z)-2-carboxy-4-methylthiazol-5(2H)-ylidene]ethyl phosphate + 4-amino-2-methyl-5-(diphosphooxymethyl)pyrimidine + 2 H(+) = thiamine phosphate + CO2 + diphosphate. It carries out the reaction 2-(2-carboxy-4-methylthiazol-5-yl)ethyl phosphate + 4-amino-2-methyl-5-(diphosphooxymethyl)pyrimidine + 2 H(+) = thiamine phosphate + CO2 + diphosphate. The enzyme catalyses 4-methyl-5-(2-phosphooxyethyl)-thiazole + 4-amino-2-methyl-5-(diphosphooxymethyl)pyrimidine + H(+) = thiamine phosphate + diphosphate. It participates in cofactor biosynthesis; thiamine diphosphate biosynthesis; thiamine phosphate from 4-amino-2-methyl-5-diphosphomethylpyrimidine and 4-methyl-5-(2-phosphoethyl)-thiazole: step 1/1. Condenses 4-methyl-5-(beta-hydroxyethyl)thiazole monophosphate (THZ-P) and 2-methyl-4-amino-5-hydroxymethyl pyrimidine pyrophosphate (HMP-PP) to form thiamine monophosphate (TMP). This is Thiamine-phosphate synthase from Bacillus cereus (strain B4264).